Here is a 372-residue protein sequence, read N- to C-terminus: MFEFEITSNCSNTKARTGIFHTPNGKVNTPKFMPVGTMATVKGISSKQLTSTGSEMILSNTFHLHLQPGEKLVKESGGIHNFMNWSKPILTDSGGYQVFSLAKLNNISDKGVEFKNPRDGSHVFLSPEKVIKIQMDLGSDVAMAFDHCPPHTANENDIEDSLQRTHSWLEKCIETHQKSNQALFGIVQGGKYPRLREYSAKFTSSFDLPGIAVGGVSVGEAVEDIHSVINYVPKFLPINKPRYLMGIGSLREISLAVANGFDIFDCVLPTRLGRHGTAFLNDERLNLRNARFKNDFSPIDKTCKCETCKSYSRAYLHHLIRNDEILGLTLISLHNIAHLLRFTNAISTAIKDNCFTNDFAPWKTSSIAHHTW.

D92 functions as the Proton acceptor in the catalytic mechanism. Substrate-binding positions include D92–Y96, D146, Q188, and G215. The interval G246–E252 is RNA binding. D265 (nucleophile) is an active-site residue. Positions T270–R274 are RNA binding; important for wobble base 34 recognition. Positions 303, 305, 308, and 334 each coordinate Zn(2+).

This sequence belongs to the queuine tRNA-ribosyltransferase family. As to quaternary structure, homodimer. Within each dimer, one monomer is responsible for RNA recognition and catalysis, while the other monomer binds to the replacement base PreQ1. It depends on Zn(2+) as a cofactor.

The enzyme catalyses 7-aminomethyl-7-carbaguanine + guanosine(34) in tRNA = 7-aminomethyl-7-carbaguanosine(34) in tRNA + guanine. It functions in the pathway tRNA modification; tRNA-queuosine biosynthesis. In terms of biological role, catalyzes the base-exchange of a guanine (G) residue with the queuine precursor 7-aminomethyl-7-deazaguanine (PreQ1) at position 34 (anticodon wobble position) in tRNAs with GU(N) anticodons (tRNA-Asp, -Asn, -His and -Tyr). Catalysis occurs through a double-displacement mechanism. The nucleophile active site attacks the C1' of nucleotide 34 to detach the guanine base from the RNA, forming a covalent enzyme-RNA intermediate. The proton acceptor active site deprotonates the incoming PreQ1, allowing a nucleophilic attack on the C1' of the ribose to form the product. After dissociation, two additional enzymatic reactions on the tRNA convert PreQ1 to queuine (Q), resulting in the hypermodified nucleoside queuosine (7-(((4,5-cis-dihydroxy-2-cyclopenten-1-yl)amino)methyl)-7-deazaguanosine). The chain is Queuine tRNA-ribosyltransferase from Prochlorococcus marinus (strain MIT 9215).